Reading from the N-terminus, the 513-residue chain is ATP synthase subunit alpha (513 aa).

ATP is bound at residue 169 to 176 (GDRQTGKT).

This sequence belongs to the ATPase alpha/beta chains family. As to quaternary structure, F-type ATPases have 2 components, CF(1) - the catalytic core - and CF(0) - the membrane proton channel. CF(1) has five subunits: alpha(3), beta(3), gamma(1), delta(1), epsilon(1). CF(0) has three main subunits: a(1), b(2) and c(9-12). The alpha and beta chains form an alternating ring which encloses part of the gamma chain. CF(1) is attached to CF(0) by a central stalk formed by the gamma and epsilon chains, while a peripheral stalk is formed by the delta and b chains.

The protein localises to the cell inner membrane. It catalyses the reaction ATP + H2O + 4 H(+)(in) = ADP + phosphate + 5 H(+)(out). Functionally, produces ATP from ADP in the presence of a proton gradient across the membrane. The alpha chain is a regulatory subunit. The sequence is that of ATP synthase subunit alpha from Haemophilus ducreyi (strain 35000HP / ATCC 700724).